We begin with the raw amino-acid sequence, 563 residues long: Formate--tetrahydrofolate ligase (563 aa).

Residue 65-72 participates in ATP binding; sequence TPLGEGKT.

It belongs to the formate--tetrahydrofolate ligase family.

It carries out the reaction (6S)-5,6,7,8-tetrahydrofolate + formate + ATP = (6R)-10-formyltetrahydrofolate + ADP + phosphate. Its pathway is one-carbon metabolism; tetrahydrofolate interconversion. The protein is Formate--tetrahydrofolate ligase of Cutibacterium acnes (strain DSM 16379 / KPA171202) (Propionibacterium acnes).